A 251-amino-acid polypeptide reads, in one-letter code: 3-deoxy-manno-octulosonate cytidylyltransferase (251 aa).

It belongs to the KdsB family.

It is found in the cytoplasm. The enzyme catalyses 3-deoxy-alpha-D-manno-oct-2-ulosonate + CTP = CMP-3-deoxy-beta-D-manno-octulosonate + diphosphate. Its pathway is nucleotide-sugar biosynthesis; CMP-3-deoxy-D-manno-octulosonate biosynthesis; CMP-3-deoxy-D-manno-octulosonate from 3-deoxy-D-manno-octulosonate and CTP: step 1/1. It participates in bacterial outer membrane biogenesis; lipopolysaccharide biosynthesis. Functionally, activates KDO (a required 8-carbon sugar) for incorporation into bacterial lipopolysaccharide in Gram-negative bacteria. This is 3-deoxy-manno-octulosonate cytidylyltransferase from Brucella abortus (strain 2308).